The sequence spans 361 residues: Plasmid recombination enzyme (361 aa).

DNA is bound by residues Tyr-44 and Tyr-114. The tract at residues 331-361 (RAGLKEPSKKAPESSQELDRHKSDELGGPHL) is disordered.

It belongs to the plasmid mobilization pre family.

Its function is as follows. The interaction of the RSA site and the pre protein may not only serve a function in plasmid maintenance, but also contribute to the distribution of small antibiotic resistance plasmids among Gram-positive bacteria. The protein is Plasmid recombination enzyme (preA) of Lactiplantibacillus plantarum (Lactobacillus plantarum).